The primary structure comprises 269 residues: Sulfur carrier protein FdhD (269 aa).

Cys-111 (cysteine persulfide intermediate) is an active-site residue.

Belongs to the FdhD family.

The protein localises to the cytoplasm. In terms of biological role, required for formate dehydrogenase (FDH) activity. Acts as a sulfur carrier protein that transfers sulfur from IscS to the molybdenum cofactor prior to its insertion into FDH. This is Sulfur carrier protein FdhD from Brucella melitensis biotype 1 (strain ATCC 23456 / CCUG 17765 / NCTC 10094 / 16M).